The chain runs to 155 residues: Endoribonuclease YbeY (155 aa).

The Zn(2+) site is built by His-114, His-118, and His-124.

This sequence belongs to the endoribonuclease YbeY family. Requires Zn(2+) as cofactor.

The protein localises to the cytoplasm. Its function is as follows. Single strand-specific metallo-endoribonuclease involved in late-stage 70S ribosome quality control and in maturation of the 3' terminus of the 16S rRNA. The chain is Endoribonuclease YbeY from Escherichia coli O17:K52:H18 (strain UMN026 / ExPEC).